Reading from the N-terminus, the 190-residue chain is Putative glutathione-dependent formaldehyde-activating enzyme (190 aa).

The 147-residue stretch at 19 to 165 folds into the CENP-V/GFA domain; the sequence is FKGGKLYCHC…FRKVGLQPYD (147 aa). The Zn(2+) site is built by Cys-26, Cys-28, Cys-47, Cys-49, Cys-52, Cys-94, and Cys-97.

Belongs to the Gfa family. Zn(2+) serves as cofactor.

It catalyses the reaction S-(hydroxymethyl)glutathione = glutathione + formaldehyde. The protein operates within one-carbon metabolism; formaldehyde degradation; formate from formaldehyde (glutathione route): step 1/3. Its function is as follows. Catalyzes the condensation of formaldehyde and glutathione to S-hydroxymethylglutathione. This chain is Putative glutathione-dependent formaldehyde-activating enzyme, found in Pyrenophora teres f. teres (strain 0-1) (Barley net blotch fungus).